A 181-amino-acid polypeptide reads, in one-letter code: ATP-dependent protease subunit HslV (181 aa).

Thr9 is an active-site residue. Positions 164, 167, and 170 each coordinate Na(+).

It belongs to the peptidase T1B family. HslV subfamily. As to quaternary structure, a double ring-shaped homohexamer of HslV is capped on each side by a ring-shaped HslU homohexamer. The assembly of the HslU/HslV complex is dependent on binding of ATP.

The protein localises to the cytoplasm. The catalysed reaction is ATP-dependent cleavage of peptide bonds with broad specificity.. With respect to regulation, allosterically activated by HslU binding. Its function is as follows. Protease subunit of a proteasome-like degradation complex believed to be a general protein degrading machinery. In Gemmatimonas aurantiaca (strain DSM 14586 / JCM 11422 / NBRC 100505 / T-27), this protein is ATP-dependent protease subunit HslV.